A 121-amino-acid polypeptide reads, in one-letter code: Lysozyme (121 aa).

The C-type lysozyme domain maps to K1–C121. 4 disulfide bridges follow: C6–C121, C27–C110, C62–C76, and C72–C90. Active-site residues include E32 and D50.

It belongs to the glycosyl hydrolase 22 family.

The catalysed reaction is Hydrolysis of (1-&gt;4)-beta-linkages between N-acetylmuramic acid and N-acetyl-D-glucosamine residues in a peptidoglycan and between N-acetyl-D-glucosamine residues in chitodextrins.. In terms of biological role, lysozymes have primarily a bacteriolytic function; those in tissues and body fluids are associated with the monocyte-macrophage system and enhance the activity of immunoagents. This is Lysozyme from Galleria mellonella (Greater wax moth).